The chain runs to 84 residues: Cell division topological specificity factor (84 aa).

Belongs to the MinE family.

In terms of biological role, prevents the cell division inhibition by proteins MinC and MinD at internal division sites while permitting inhibition at polar sites. This ensures cell division at the proper site by restricting the formation of a division septum at the midpoint of the long axis of the cell. The chain is Cell division topological specificity factor from Pseudomonas aeruginosa (strain LESB58).